A 209-amino-acid polypeptide reads, in one-letter code: Kynurenine formamidase (209 aa).

Trp20 contacts substrate. Positions 50, 54, and 56 each coordinate Zn(2+). The active-site Proton donor/acceptor is the His60. Zn(2+) is bound by residues His161 and Glu173.

This sequence belongs to the Cyclase 1 superfamily. KynB family. Homodimer. Zn(2+) serves as cofactor.

It catalyses the reaction N-formyl-L-kynurenine + H2O = L-kynurenine + formate + H(+). Its pathway is amino-acid degradation; L-tryptophan degradation via kynurenine pathway; L-kynurenine from L-tryptophan: step 2/2. Catalyzes the hydrolysis of N-formyl-L-kynurenine to L-kynurenine, the second step in the kynurenine pathway of tryptophan degradation. This is Kynurenine formamidase from Bacillus thuringiensis (strain Al Hakam).